The following is a 319-amino-acid chain: uncharacterized protein (319 aa).

The disordered stretch occupies residues 281–319 (KVERKQRRRDDQNIMRSKLPQQRQNPFCSTERPKRARCD). Residues 299–308 (LPQQRQNPFC) show a composition bias toward polar residues.

It is found in the cytoplasm. The protein resides in the nucleus. This is an uncharacterized protein from Saccharomyces cerevisiae (strain ATCC 204508 / S288c) (Baker's yeast).